Reading from the N-terminus, the 196-residue chain is Hypoxanthine/guanine phosphoribosyltransferase (196 aa).

It belongs to the purine/pyrimidine phosphoribosyltransferase family. Archaeal HPRT subfamily. As to quaternary structure, homodimer.

It localises to the cytoplasm. The enzyme catalyses IMP + diphosphate = hypoxanthine + 5-phospho-alpha-D-ribose 1-diphosphate. The catalysed reaction is GMP + diphosphate = guanine + 5-phospho-alpha-D-ribose 1-diphosphate. It participates in purine metabolism; IMP biosynthesis via salvage pathway; IMP from hypoxanthine: step 1/1. Catalyzes a salvage reaction resulting in the formation of IMP that is energically less costly than de novo synthesis. The polypeptide is Hypoxanthine/guanine phosphoribosyltransferase (Methanocaldococcus sp. (strain FS406-22)).